We begin with the raw amino-acid sequence, 421 residues long: MDRAIEHTKYLIAGSSHAALEAINAIRMHDAEGPITVVTRDAHLPYSPTVLPYVVSGKSAPERIFLRDDDFFARNKVAYRPKAALKALHADRNTAELADGSSVVYEKLLLATGASPAIPPIPGIDTVSYHVLRTLDDALKLRGAIAESKQAVVLGAGLVGMHAAENLVKAGATVTIVEMSEQLTSGYFDKVAADMIEQAFRDAGGKIMTGSRVVRLEPTAAGAKLTLENGTTLEADLLLVATGVKPEMDYLNGSGVEHAQGILVDDRMQTTAENVWAAATAQARGFFTGTKVMNAILPDATIQGRVAGMAMAGDPGVKDYAGAVPLNTYHFFGRHAISVGSSTVPEGGEVVTRFDEKTGRYLKAIFAADGPLTGIFGVNEFFDGGVMAQLILRRTDLTPLRSRFVANPLAVGREIMSQTWR.

FAD contacts are provided by residues 15–18 (SSHA), 39–40 (TR), and 279–297 (ATAQARGFFTGTKVMNAIL).

This sequence belongs to the FAD-dependent oxidoreductase family. In terms of assembly, dimer of heteropentamers composed of an alpha (PadG), a beta (PadI), a gamma (PadE), a delta (PadF) and an epsilon (PadH) subunit. The cofactor is FAD.

The catalysed reaction is phenylglyoxylate + NAD(+) + CoA = benzoyl-CoA + CO2 + NADH. Activated by magnesium ions and thiamine diphosphate. In terms of biological role, involved in the anaerobic metabolism of phenylalanine and phenylacetate. Catalyzes the oxidative decarboxylation of phenylglyoxylate to benzoyl-CoA and CO(2). It can also react slowly with 2-oxo-3-methylbutanoate and use different electron acceptors such as benzyl viologen, methyl viologen, FAD or FMN, but NAD seems to be the physiological electron acceptor. Also catalyzes an isotope exchange between CO(2) and the carboxyl group which proves partial or complete reversibility of the oxidative decarboxylation reaction. The chain is NADH-dependent phenylglyoxylate dehydrogenase subunit epsilon (padH) from Aromatoleum evansii (Azoarcus evansii).